The chain runs to 110 residues: Antimicrobial peptide microplusin (110 aa).

The signal sequence occupies residues 1–20; sequence MKAIFVSALLVVALVASTSA. Disulfide bonds link Cys26-Cys72, Cys39-Cys100, and Cys61-Cys66.

As to expression, expressed in the hemocytes, fat body and ovaries.

It localises to the secreted. Functionally, has bacteriostatic activity against the Gram-positive bacterium M.luteus, but not against Gram-negative bacterium E.coli SBS363. Has fungistatic activity against C.neoformans, but not C.albicans. Binds and sequesters copper and iron ions. Copper-chelating is crucial for antimicrobial activity against M.luteus. This is Antimicrobial peptide microplusin from Rhipicephalus microplus (Cattle tick).